The chain runs to 166 residues: Lipoprotein signal peptidase (166 aa).

Transmembrane regions (helical) follow at residues Leu-12–Val-32, Met-66–Trp-86, and Ala-101–Ile-121. Residues Asp-122 and Asp-140 contribute to the active site. A helical membrane pass occupies residues Ser-132 to Leu-152.

It belongs to the peptidase A8 family.

The protein localises to the cell inner membrane. The enzyme catalyses Release of signal peptides from bacterial membrane prolipoproteins. Hydrolyzes -Xaa-Yaa-Zaa-|-(S,diacylglyceryl)Cys-, in which Xaa is hydrophobic (preferably Leu), and Yaa (Ala or Ser) and Zaa (Gly or Ala) have small, neutral side chains.. The protein operates within protein modification; lipoprotein biosynthesis (signal peptide cleavage). Its function is as follows. This protein specifically catalyzes the removal of signal peptides from prolipoproteins. This Sinorhizobium fredii (strain NBRC 101917 / NGR234) protein is Lipoprotein signal peptidase.